The following is a 743-amino-acid chain: Beta-galactosidase (743 aa).

Glu-388 (proton donor) is an active-site residue. The active-site Nucleophile is the Glu-453.

It belongs to the glycosyl hydrolase 2 family. As to quaternary structure, homodimer.

The catalysed reaction is Hydrolysis of terminal non-reducing beta-D-galactose residues in beta-D-galactosides.. Functionally, beta-galactosidase. This is Beta-galactosidase (lacZ) from Thermoanaerobacter pseudethanolicus (strain ATCC 33223 / 39E) (Clostridium thermohydrosulfuricum).